The chain runs to 125 residues: UPF0102 protein ABO_0585 (125 aa).

The protein belongs to the UPF0102 family.

The polypeptide is UPF0102 protein ABO_0585 (Alcanivorax borkumensis (strain ATCC 700651 / DSM 11573 / NCIMB 13689 / SK2)).